A 72-amino-acid polypeptide reads, in one-letter code: Protein kish-A (72 aa).

Positions 1–26 are cleaved as a signal peptide; it reads MSAIFNFQSLLTVILLLICTCAYIRS. The Extracellular portion of the chain corresponds to 27–53; it reads LTPSLLDKNKTGFLGIFWKCARIGERK. Asparagine 35 carries an N-linked (GlcNAc...) asparagine glycan. Residues 54–71 form a helical membrane-spanning segment; that stretch reads SPYVAFCCIVMALTILFS. Position 72 (glutamate 72) is a topological domain, cytoplasmic.

The protein belongs to the KISH family.

Its subcellular location is the golgi apparatus membrane. Functionally, involved in the early part of the secretory pathway. In Danio rerio (Zebrafish), this protein is Protein kish-A (tmem167a).